We begin with the raw amino-acid sequence, 2290 residues long: MKRYPFKSWIFELREILREIKNSHYFLDSWTRFDSVGSFTHIFFHQERFMKLFDPRIWSILLSRDSQGSTSNRYFTIKGVVLLVVAVLIYRINNRTMVERKNISLMGLLPIPMNFIGLRNDTLEEAFWSSNINRLIASLLYLPKRKKISESCFMDPKESTWVLPITKKRIMPESNWGSRWWRNRIGKKRDSSCKISNETVAGIEISFKEKDIKYLEFLFVSYTDDPIRKDHDWELFDRLSPRKKRNIINLNSGQLFEILVKHSICYLMSVFREKRPIEVKGFFKQQGAEATIQSNDIEHVSHLFSRDQWGISLQNCAQFHMWQFRQDLFVSWGKNPHESDFLRNASRENWIWLDNVWLVNKDRFFSKVRNVSSNMEYDSTRSLFVQVPDSSQWKGSSDQSRDHFDSISNEDSEYHTWINQTEIQQLKERSILWDPSFLQTERTEIESDRFPKCLSGYSSMYRLFTEREKQMNNHLLPEEIEEFLGNPTRSIRSFFSDRWSELHLGSNPTERSTRDQKSLKKQQDVSFVPPRRSENQEMVDIFKIITYLQNIVSIHPISSDPGCDMVPKDEPDMDRSNKISFLNKNPFFDLFHPFHDRNKGGYTLHHDFESESEERFQEIADLFTLSITEPDLVYHKGFAFSIDSYGLDQTKFLNEVFNSRDESKKKSLLVLPPIFDEENESFSRRIRKKSGRISCGNDLEDPKQKIVVFASKNIMEAVNQYRLIRNLIQIQYSTYGYIRNVLNRFFLMNGSDRNFEYGIQRDQIGTDTLNHITIMKYTINQHLSNLKKSQKKWFNPLISRTERSMNRDPNAYRYKWFNGSKNFQEHLEHFVSEQKNRFQVVIDRLRINQYSIDWSEVIDKQDLSKSLRFFLSKSLLFLSKSLLFLSKSLPFFFVSIGNIPIHRSEIHIYELKGPNDQLCNQLLESIGVQIVHLNKLKPFLLDDHDTSQRSKFLINGGTISPFLFNKIPKWMIDSSHTRKNRRKSFDNTDSYFSMISPDRDNWLNPVKPFHRSSLISSFYKAIRFLNNPHPFWFYCNKRFPLYVDVEKARINNYDLTYGQFLNILFIRNKIFSLCVGKKKHVFLERDTISPTESQVSDIFIPNDFPQSGDETYNLYKSFHLPIRSDPFVRRAIYSIADIYGTPLIEEQIVNFERTYCQPLSDMNISDSEGKNLHHQYLSFNSNMGLIHTPCSEKDFPSGRRKKKSIYLKKCVEKWRMYRTFQRDSAFSNLSKWNLFQTYMPWFLTSTGCKYLNFTLLDTFSDPLPILSSSPKFVSIFHDIMHGSDISWPIRQKKWWAILPQRNLISEISSKCLQNLLLSEEMIHRNNESPVPLIWTHLRSPNAREFLYSILFLLLVAGYLVRTHLLFVSRASSELQTELEKIKSLMIPSYMIDLRKLLDRYPTSELNSFWLKNLFLVALEQLGDSLEEIRGYANTLLGGGPAYGEKSIRSKKKYWNINLIDLISIIPNPINRITFSRDTRHLSRTSKEIYSLIRKRKNVNGDWIDDKIESWVANSDSIDDEEREFLVQFCTLATEKRIDQILLSLTHSDHLSKNDSGYQMIEQPGSIYLRYLVDIHQKYLMNYEFNRSCLAERRIFLAHYQTITYSQTSCRANSSHFPSHGKPFSLRLALSPSRGILVIGSIGTGRSYLVKYLATNSYLPFITVFPNKFLDDKPKGYLSDDIDIDDSDAIDDSDDIDDSDDIDDDLDTELLTMYMTPKIDRFDITPQFELAKAMSPCIIWIPNIHDLYVNESNYLSLGLLVNYLSRDCERCSTRKILVIASTHIPQKVDPALIAPNKLNTCIKIRRLLIPQQRKRFFILSYTRGFRLEKKMFHTNGFGSITMGSNARDLVALTNEALSISITQKKSIIDTNTIRAALHRQTWDLRSRVRSVQDHGIFFYQIGRAVAQNVLLSHCPIDPISIYMKKKLCKEGDSYLYKWYFELGTSIKKFTILLYLLSSSAGFVAQDLWSPPGPDEKNGITSYGFVENDSDLVHALLEVEGALVGSSRTEKDCSQFDNDRATLLLRSEPRNQLDMMQNGSCSIVDQRFLYEKDESDFEEGEGALDPQQIEEDLFNHIVWAPRIWRPCGNLFDCIESPNSLGFPYWARSSRGKRIIYHKEDEHQENDSEFLQSGTMQYQTRDRSSKEQGFFRISQFILDPADPFFFLFKDQPFVSVFSRREFFADQEMSKGLITSQTNPPTSLYKRWFIKNTQEKHFQLLIHRQRWLRTNSSLSNRSSRSNTPSESYQYLSNLFLSNGTLLDQMTKTLLRKRWLFPDEMKHLIHVTGERFPIP.

A disordered region spans residues 505 to 530; that stretch reads GSNPTERSTRDQKSLKKQQDVSFVPP. A compositionally biased stretch (basic and acidic residues) spans 511-523; it reads RSTRDQKSLKKQQ. 1639-1646 serves as a coordination point for ATP; sequence GSIGTGRS.

The protein belongs to the Ycf2 family.

Its subcellular location is the plastid. It is found in the chloroplast stroma. In terms of biological role, probable ATPase of unknown function. Its presence in a non-photosynthetic plant (Epifagus virginiana) and experiments in tobacco indicate that it has an essential function which is probably not related to photosynthesis. In Ceratophyllum demersum (Rigid hornwort), this protein is Protein Ycf2.